A 348-amino-acid chain; its full sequence is tRNA N6-adenosine threonylcarbamoyltransferase (348 aa).

Residues His-115 and His-119 each contribute to the Fe cation site. Residues 138–142 (LVSGG), Asp-171, Gly-184, and Asn-276 contribute to the substrate site. Asp-304 serves as a coordination point for Fe cation.

The protein belongs to the KAE1 / TsaD family. Requires Fe(2+) as cofactor.

The protein localises to the cytoplasm. It carries out the reaction L-threonylcarbamoyladenylate + adenosine(37) in tRNA = N(6)-L-threonylcarbamoyladenosine(37) in tRNA + AMP + H(+). Functionally, required for the formation of a threonylcarbamoyl group on adenosine at position 37 (t(6)A37) in tRNAs that read codons beginning with adenine. Is involved in the transfer of the threonylcarbamoyl moiety of threonylcarbamoyl-AMP (TC-AMP) to the N6 group of A37, together with TsaE and TsaB. TsaD likely plays a direct catalytic role in this reaction. The chain is tRNA N6-adenosine threonylcarbamoyltransferase from Xylella fastidiosa (strain 9a5c).